Reading from the N-terminus, the 120-residue chain is NAD(P)H-quinone oxidoreductase subunit 3, chloroplastic (120 aa).

Transmembrane regions (helical) follow at residues 9–29 (IFWA…FLSG), 62–82 (YYMF…LYPW), and 88–108 (VLGV…IVGL).

Belongs to the complex I subunit 3 family. As to quaternary structure, NDH is composed of at least 16 different subunits, 5 of which are encoded in the nucleus.

It localises to the plastid. Its subcellular location is the chloroplast thylakoid membrane. It carries out the reaction a plastoquinone + NADH + (n+1) H(+)(in) = a plastoquinol + NAD(+) + n H(+)(out). The enzyme catalyses a plastoquinone + NADPH + (n+1) H(+)(in) = a plastoquinol + NADP(+) + n H(+)(out). Its function is as follows. NDH shuttles electrons from NAD(P)H:plastoquinone, via FMN and iron-sulfur (Fe-S) centers, to quinones in the photosynthetic chain and possibly in a chloroplast respiratory chain. The immediate electron acceptor for the enzyme in this species is believed to be plastoquinone. Couples the redox reaction to proton translocation, and thus conserves the redox energy in a proton gradient. This is NAD(P)H-quinone oxidoreductase subunit 3, chloroplastic from Trachelium caeruleum (Blue throatwort).